A 238-amino-acid chain; its full sequence is C-type lectin domain family 4 member A (238 aa).

Residues 1–48 (MASEITYAEVKFKNESNSLHTYSESPAAPREKPIRDLRKPGSPSLLLT) are Cytoplasmic-facing. Residues 5–10 (ITYAEV) carry the ITIM motif motif. The chain crosses the membrane as a helical; Signal-anchor for type II membrane protein span at residues 49 to 69 (SLMLLLLLLAITFLVAFIIYF). Residues 70 to 238 (QKYSQLLEEK…SVCQMKKINL (169 aa)) lie on the Extracellular side of the membrane. The N-linked (GlcNAc...) asparagine glycan is linked to N91. C107 and C118 are disulfide-bonded. The 108-residue stretch at 126-233 (SSASWNKSEE…SLKQKSVCQM (108 aa)) folds into the C-type lectin domain. N-linked (GlcNAc...) asparagine glycosylation is found at N131 and N136. Cystine bridges form between C137-C231 and C205-C223. Positions 146, 152, 197, 199, and 203 each coordinate Ca(2+). Alpha-D-mannopyranose contacts are provided by residues 197–199 (EPS) and E203. 209 to 211 (IYR) is a binding site for N-acetyl-D-glucosamine. Ca(2+) is bound by residues N219 and D220.

As to quaternary structure, may interact with PTPN6 via its ITIM site. As to expression, expressed in splenic antigen-presenting cells including B-cells, monocytes/macrophages, and dendritic cells (at protein level). Expressed in spleen and lymph node and slightly increased with dendritic cell maturation.

The protein resides in the cell membrane. Its function is as follows. May be involved in regulating immune reactivity. May play a role in modulating dendritic cells (DC) differentiation and/or maturation. May be involved in the inhibition of B-cell-receptor-mediated calcium mobilization and protein tyrosine phosphorylation. Functionally, C-type lectin receptor that binds carbohydrates mannose and fucose but also weakly interacts with N-acetylglucosamine (GlcNAc) in a Ca(2+)-dependent manner. Involved in regulating immune reactivity. Once triggered by antigen, it is internalized by clathrin-dependent endocytosis and delivers its antigenic cargo into the antigen presentation pathway resulting in cross-priming of CD8(+) T cells. This cross-presentation and cross-priming are enhanced by TLR7 and TLR8 agonists with increased expansion of the CD8(+) T cells, high production of IFNG and TNF with reduced levels of IL4, IL5 and IL13. In plasmacytoid dendritic cells, inhibits TLR9-mediated IFNA and TNF production. May be involved via its ITIM motif (immunoreceptor tyrosine-based inhibitory motifs) in the inhibition of B-cell-receptor-mediated calcium mobilization and protein tyrosine phosphorylation. In Mus musculus (Mouse), this protein is C-type lectin domain family 4 member A (Clec4a).